Consider the following 767-residue polypeptide: V-set and immunoglobulin domain-containing protein 10-like 2 (767 aa).

The N-terminal stretch at 1–28 (MVGQRAQHSPVSLLLLIHLCLLHLRASG) is a signal peptide. 3 Ig-like domains span residues 34–140 (PEAP…SHLT), 150–234 (PQVR…AFLD), and 242–324 (PVIT…TTVQ). Intrachain disulfides connect cysteine 56/cysteine 122, cysteine 169/cysteine 217, and cysteine 268/cysteine 308. Residue asparagine 376 is glycosylated (N-linked (GlcNAc...) asparagine). Ig-like domains follow at residues 399–499 (PALA…LQLE) and 501–593 (PQLD…VLLE). 2 cysteine pairs are disulfide-bonded: cysteine 435–cysteine 481 and cysteine 522–cysteine 577. The Fibronectin type-III domain maps to 599 to 699 (APPNVTISRL…EVKIPADPPF (101 aa)). N-linked (GlcNAc...) asparagine glycans are attached at residues asparagine 602 and asparagine 628. Residues 704 to 724 (AVLGAAGTGMVVATVASLLVF) traverse the membrane as a helical segment. A disordered region spans residues 735–754 (PRLETPTTTPGLDPAQETTD). Residues 739 to 754 (TPTTTPGLDPAQETTD) show a composition bias toward polar residues.

The protein localises to the membrane. This Homo sapiens (Human) protein is V-set and immunoglobulin domain-containing protein 10-like 2.